Here is a 496-residue protein sequence, read N- to C-terminus: Glutamate--tRNA ligase (496 aa).

Residues 10-20 (PSPTGPLHIGG) carry the 'HIGH' region motif. The short motif at 251–255 (KMSKR) is the 'KMSKS' region element. K254 contributes to the ATP binding site.

Belongs to the class-I aminoacyl-tRNA synthetase family. Glutamate--tRNA ligase type 1 subfamily. Monomer.

The protein resides in the cytoplasm. The enzyme catalyses tRNA(Glu) + L-glutamate + ATP = L-glutamyl-tRNA(Glu) + AMP + diphosphate. Its function is as follows. Catalyzes the attachment of glutamate to tRNA(Glu) in a two-step reaction: glutamate is first activated by ATP to form Glu-AMP and then transferred to the acceptor end of tRNA(Glu). This chain is Glutamate--tRNA ligase, found in Heliobacterium modesticaldum (strain ATCC 51547 / Ice1).